A 326-amino-acid polypeptide reads, in one-letter code: N-acetyl-gamma-glutamyl-phosphate reductase (326 aa).

Residue C155 is part of the active site.

This sequence belongs to the NAGSA dehydrogenase family. Type 1 subfamily.

It is found in the cytoplasm. It catalyses the reaction N-acetyl-L-glutamate 5-semialdehyde + phosphate + NADP(+) = N-acetyl-L-glutamyl 5-phosphate + NADPH + H(+). Its pathway is amino-acid biosynthesis; L-arginine biosynthesis; N(2)-acetyl-L-ornithine from L-glutamate: step 3/4. Its function is as follows. Catalyzes the NADPH-dependent reduction of N-acetyl-5-glutamyl phosphate to yield N-acetyl-L-glutamate 5-semialdehyde. In Shewanella baltica (strain OS195), this protein is N-acetyl-gamma-glutamyl-phosphate reductase.